Reading from the N-terminus, the 610-residue chain is T-cell immunomodulatory protein (610 aa).

The signal sequence occupies residues 1-32 (MAAGRLPSARAVLAPLFLGLALLSVGPAPARA). Asn35, Asn123, Asn138, Asn145, Asn150, Asn175, and Asn241 each carry an N-linked (GlcNAc...) asparagine glycan. One copy of the FG-GAP 1; atypical repeat lies at 98-135 (LVTSVVPGDYDGDSQMDVLLTYFPQNHTNSELGAVIFW). The FG-GAP 2; atypical repeat unit spans residues 153–183 (FHDQPLIMDFNGDLIPDVFGITNESSQPQIL). One copy of the FG-GAP 3; atypical repeat lies at 256-291 (VVGQSAFADFDGDGHMDHLLPGCEDKDCQKSAIYLM). N-linked (GlcNAc...) asparagine glycosylation is found at Asn351, Asn369, and Asn480. A helical transmembrane segment spans residues 565-585 (VLLTAVALIGVCIFILAIIAI).

This sequence belongs to the TIP family. Interacts with RUVBL1, RUVBL2 and alpha-tubulin.

The protein localises to the secreted. It localises to the membrane. Its function is as follows. Modulator of T-cell function. Has a protective effect in graft versus host disease model. This is T-cell immunomodulatory protein from Mus musculus (Mouse).